Consider the following 55-residue polypeptide: Ribulose bisphosphate carboxylase large chain (55 aa).

His18 serves as the catalytic Proton acceptor. Residues Arg19 and His27 each coordinate substrate.

Belongs to the RuBisCO large chain family. Type I subfamily. As to quaternary structure, heterohexadecamer of 8 large chains and 8 small chains; disulfide-linked. The disulfide link is formed within the large subunit homodimers. It depends on Mg(2+) as a cofactor. Post-translationally, the disulfide bond which can form in the large chain dimeric partners within the hexadecamer appears to be associated with oxidative stress and protein turnover.

The protein localises to the plastid. The protein resides in the chloroplast. The enzyme catalyses 2 (2R)-3-phosphoglycerate + 2 H(+) = D-ribulose 1,5-bisphosphate + CO2 + H2O. It carries out the reaction D-ribulose 1,5-bisphosphate + O2 = 2-phosphoglycolate + (2R)-3-phosphoglycerate + 2 H(+). RuBisCO catalyzes two reactions: the carboxylation of D-ribulose 1,5-bisphosphate, the primary event in carbon dioxide fixation, as well as the oxidative fragmentation of the pentose substrate in the photorespiration process. Both reactions occur simultaneously and in competition at the same active site. The sequence is that of Ribulose bisphosphate carboxylase large chain from Vitis sp. (Grape).